Reading from the N-terminus, the 181-residue chain is Large ribosomal subunit protein uL5c (181 aa).

This sequence belongs to the universal ribosomal protein uL5 family. As to quaternary structure, part of the 50S ribosomal subunit; contacts the 5S rRNA.

It is found in the plastid. The protein resides in the chloroplast. In terms of biological role, binds 5S rRNA, forms part of the central protuberance of the 50S subunit. The polypeptide is Large ribosomal subunit protein uL5c (rpl5) (Pyropia yezoensis (Susabi-nori)).